The following is a 985-amino-acid chain: DNA ligase 4 (985 aa).

2 disordered regions span residues 1–27 and 43–70; these read MDRL…RNKH and LNGN…QTLS. Positions 10–20 are enriched in basic and acidic residues; that stretch reads ETERELDEKYP. A compositionally biased stretch (basic residues) spans 46–61; it reads NKKRPTGPAAARKKLG. Positions 310, 312, 313, 317, 379, 420, 480, 485, 502, and 504 each coordinate ATP. K312 acts as the N6-AMP-lysine intermediate in catalysis. E379 is a Mg(2+) binding site. Residue E480 coordinates Mg(2+). BRCT domains are found at residues 711–804 and 878–983; these read PSGH…PDLL and LRGW…RFAP.

The protein belongs to the ATP-dependent DNA ligase family. Mg(2+) is required as a cofactor.

The protein resides in the nucleus. It carries out the reaction ATP + (deoxyribonucleotide)n-3'-hydroxyl + 5'-phospho-(deoxyribonucleotide)m = (deoxyribonucleotide)n+m + AMP + diphosphate.. In terms of biological role, DNA ligase involved in DNA non-homologous end joining (NHEJ); required for double-strand break (DSB) repair. In Coccidioides immitis (strain RS) (Valley fever fungus), this protein is DNA ligase 4 (LIG4).